The chain runs to 246 residues: Cell division protein ZapD (246 aa).

Belongs to the ZapD family. As to quaternary structure, interacts with FtsZ.

The protein resides in the cytoplasm. In terms of biological role, cell division factor that enhances FtsZ-ring assembly. Directly interacts with FtsZ and promotes bundling of FtsZ protofilaments, with a reduction in FtsZ GTPase activity. This Vibrio vulnificus (strain CMCP6) protein is Cell division protein ZapD.